Here is a 291-residue protein sequence, read N- to C-terminus: 4-hydroxy-tetrahydrodipicolinate synthase (291 aa).

T45 serves as a coordination point for pyruvate. Y133 functions as the Proton donor/acceptor in the catalytic mechanism. K161 (schiff-base intermediate with substrate) is an active-site residue. Position 203 (I203) interacts with pyruvate.

It belongs to the DapA family. In terms of assembly, homotetramer; dimer of dimers.

The protein localises to the cytoplasm. It catalyses the reaction L-aspartate 4-semialdehyde + pyruvate = (2S,4S)-4-hydroxy-2,3,4,5-tetrahydrodipicolinate + H2O + H(+). The protein operates within amino-acid biosynthesis; L-lysine biosynthesis via DAP pathway; (S)-tetrahydrodipicolinate from L-aspartate: step 3/4. Catalyzes the condensation of (S)-aspartate-beta-semialdehyde [(S)-ASA] and pyruvate to 4-hydroxy-tetrahydrodipicolinate (HTPA). The chain is 4-hydroxy-tetrahydrodipicolinate synthase from Methylococcus capsulatus (strain ATCC 33009 / NCIMB 11132 / Bath).